We begin with the raw amino-acid sequence, 857 residues long: RNA-directed RNA polymerase 2a (857 aa).

Residues lysine 511 to proline 624 form the RdRp catalytic domain. The disordered stretch occupies residues arginine 782 to valine 829. A compositionally biased stretch (polar residues) spans lysine 804–glutamine 816.

This sequence belongs to the ssRNA positive-strand viruses RNA-directed RNA polymerase family. In terms of assembly, interacts with replication protein 1a.

The catalysed reaction is RNA(n) + a ribonucleoside 5'-triphosphate = RNA(n+1) + diphosphate. Functionally, RNA-dependent RNA polymerase which replicates the viral genome composed of 3 RNA segments, RNA1, RNA2 and RNA3. The sequence is that of RNA-directed RNA polymerase 2a from Cucumis sativus (Cucumber).